Consider the following 417-residue polypeptide: Serine hydroxymethyltransferase (417 aa).

(6S)-5,6,7,8-tetrahydrofolate-binding positions include Leu-122 and 126 to 128 (GHL). Residue Lys-230 is modified to N6-(pyridoxal phosphate)lysine. A (6S)-5,6,7,8-tetrahydrofolate-binding site is contributed by 355-357 (SPF).

It belongs to the SHMT family. In terms of assembly, homodimer. Pyridoxal 5'-phosphate serves as cofactor.

Its subcellular location is the cytoplasm. It catalyses the reaction (6R)-5,10-methylene-5,6,7,8-tetrahydrofolate + glycine + H2O = (6S)-5,6,7,8-tetrahydrofolate + L-serine. Its pathway is one-carbon metabolism; tetrahydrofolate interconversion. It participates in amino-acid biosynthesis; glycine biosynthesis; glycine from L-serine: step 1/1. Its function is as follows. Catalyzes the reversible interconversion of serine and glycine with tetrahydrofolate (THF) serving as the one-carbon carrier. This reaction serves as the major source of one-carbon groups required for the biosynthesis of purines, thymidylate, methionine, and other important biomolecules. Also exhibits THF-independent aldolase activity toward beta-hydroxyamino acids, producing glycine and aldehydes, via a retro-aldol mechanism. In Francisella tularensis subsp. mediasiatica (strain FSC147), this protein is Serine hydroxymethyltransferase.